The following is a 1216-amino-acid chain: MSQAGDVEGPSTGDPVLSPQHNCELLQNMEGASSMPGLSPDGPGASSGPGVRAGSRRKIPRKEALRGGSSRAAGAAEVRPGVLELLAVVQSRGSMLAPGLHMQLPSVPTQGRALTSKRLQVSLCDILDDSCPRKLCSRSAGLPERALACRERLAGVEEVSCLRPREARDGGMSSPGCDRRSPTLSKEEPPGRPLTSSPDPVPVRVRKKWRRQGAHSECEEGAGDFLWLDQSPRGDNLLSVGDPPQVADLESLGGPCRPPSPKDTGSGPGEPGGSGAGCASGTEKFGYLPATGDGPQPGSPCGPVGFPVPSGGESLSSAAQAPPQSAALCLGASAQASAEQQEAVCVVRTGSDEGQAPAQDQEELEAKAQPASRGRLEQGLAAPADTCASSREPLGGLSSSLDTEASRACSGPFMEQRRSKGTKNLKKGPVPCAQDRGTDRSSDNSHQDRPEEPSPGGCPRLEEVKIPHGVKLVCYLGSGPVIQLLGAISHGQAGGQLPPKLEVLEDLMEVSSPSPAQRLRRKKRPMVQGPAGCQVFQPSPSGGTAGDPGGLSDPFYPPRSGSLALGDPSSDPACSQSGPMEAEEDSLPEQPEDSAQLQQEKPSLYIGVRGTVVRSMQEVLWTRLRELPDPVLSEEVVEGIAAGIEAALWDLTQGTNGRYKTKYRSLLFNLRDPRNLDLFLKVVHGDVTPYDLVRMSSMQLAPQELARWRDQEEKRGLNIIEQQQKEPCRLPASKMTHKGEVEIQRDMDQTLTLEDLVGPQMFMDCSPQALPIASEDTTGQHDHHFLDPNCHICKDWEPSNELLGSFEAAKSCGDNIFQKALSQTPMPAPEMPKTRELSPTEPQDRVPPSGLHVPAAPTKALPCLPPWEGVLDMFSIKRFRARAQLVSGHSCRLVQALPTVIRSAGCIPSNIVWDLLASICPAKAKDVCVVRLCPHGARDTQNCRLLYSYLNDRQRHGLASVEHMGMVLLPLPAFQPLPTRLRPLGGPGLWALPVSPLLSPGLEVTHSSLLLAVLLPKEGLPDTAGSSPWLGKVQKMVSFNSKVEKRYYQPDDRRPNVPLKGTPPPGGAWQQSQGRGSIAPRGISAWQRPPRGRGRLWPEPENWQHPGRGQWPPEPGLRQSQHPYSVAPAGHGFGRGQHFHRDSCPHQALLRHLESLATMSHQLQALLCPQTKSSIPRPLQRLSSALAAPEPPGPARDSSLGPTDEAGSECPFPRKA.

Disordered stretches follow at residues 1–74, 166–216, 236–325, 348–462, and 511–601; these read MSQA…RAAG, EARD…GAHS, NLLS…PPQS, RTGS…PRLE, and SSPS…QQEK. Low complexity predominate over residues 36-50; that stretch reads PGLSPDGPGASSGPG. The segment covering 177-190 has biased composition (basic and acidic residues); it reads CDRRSPTLSKEEPP. Residues 204-213 are compositionally biased toward basic residues; sequence RVRKKWRRQG. Residues 266–278 are compositionally biased toward gly residues; it reads SGPGEPGGSGAGC. Over residues 314–325 the composition is skewed to low complexity; the sequence is SLSSAAQAPPQS. Positions 436 to 452 are enriched in basic and acidic residues; the sequence is RGTDRSSDNSHQDRPEE. A compositionally biased stretch (acidic residues) spans 581–592; the sequence is EAEEDSLPEQPE. Residues 608 to 728 form the TFIIS central domain; it reads VRGTVVRSMQ…IIEQQQKEPC (121 aa). The segment at 823–850 is disordered; the sequence is QTPMPAPEMPKTRELSPTEPQDRVPPSG. A compositionally biased stretch (basic and acidic residues) spans 832–844; the sequence is PKTRELSPTEPQD. Positions 867 to 970 constitute an SPOC domain; sequence WEGVLDMFSI…VEHMGMVLLP (104 aa). The span at 1046–1055 shows a compositional bias: basic and acidic residues; it reads RYYQPDDRRP. 2 disordered regions span residues 1046–1140 and 1176–1216; these read RYYQ…QHFH and PRPL…PRKA.

In terms of assembly, interacts with DNMT3A, DNMT3C and DNMT3L. Interacts with C19orf84. Interacts with SPIN1; promoting recruitment to transposons marked with histone H3 trimethylated at both 'Lys-4' and 'Lys-9' (H3K4me3K9me3).

The protein localises to the nucleus. The protein resides in the chromosome. Its function is as follows. Protein adapter that acts as an essential executor of PIWIL4-piRNA pathway directed transposon DNA methylation and silencing in the male embryonic germ cells. Recruited to young transposons, which are specifically marked with histone H3 trimethylated at both 'Lys-4' and 'Lys-9' (H3K4me3K9me3), via its association with SPIN1 chromatin reader, and associates with the de novo DNA methylation machinery and repressive chromatin remodeling complexes. Following this, PIWIL4 engages with nascent transposable element transcript to direct piRNA-directed DNA methylation. Not required for piRNA biosynthesis. The polypeptide is SPOC domain-containing protein 1 (Homo sapiens (Human)).